A 354-amino-acid chain; its full sequence is NADH-quinone oxidoreductase subunit H (354 aa).

Helical transmembrane passes span 12-32 (LLGG…LIAP), 62-82 (PWGL…EIIL), 89-109 (GLFL…WVVV), 124-144 (LLFL…AGWA), 162-182 (VSYE…SGTL), 203-223 (FLSW…ISGL), 239-259 (EIVA…FFLA), 263-283 (NMIL…LPPI), 291-311 (IPGW…FLWV), and 326-346 (LGWK…GLWI).

It belongs to the complex I subunit 1 family. In terms of assembly, NDH-1 is composed of 14 different subunits. Subunits NuoA, H, J, K, L, M, N constitute the membrane sector of the complex.

Its subcellular location is the cell inner membrane. It catalyses the reaction a quinone + NADH + 5 H(+)(in) = a quinol + NAD(+) + 4 H(+)(out). NDH-1 shuttles electrons from NADH, via FMN and iron-sulfur (Fe-S) centers, to quinones in the respiratory chain. The immediate electron acceptor for the enzyme in this species is believed to be ubiquinone. Couples the redox reaction to proton translocation (for every two electrons transferred, four hydrogen ions are translocated across the cytoplasmic membrane), and thus conserves the redox energy in a proton gradient. This subunit may bind ubiquinone. This Methylibium petroleiphilum (strain ATCC BAA-1232 / LMG 22953 / PM1) protein is NADH-quinone oxidoreductase subunit H.